A 210-amino-acid chain; its full sequence is Proteasome subunit beta 2 (210 aa).

Residues 1–12 constitute a propeptide, removed in mature form; by autocatalysis; sequence MSNNVEEKILHG. Thr13 serves as the catalytic Nucleophile.

Belongs to the peptidase T1B family. In terms of assembly, the 20S proteasome core is composed of 14 alpha and 14 beta subunits that assemble into four stacked heptameric rings, resulting in a barrel-shaped structure. The two inner rings, each composed of seven catalytic beta subunits, are sandwiched by two outer rings, each composed of seven alpha subunits. The catalytic chamber with the active sites is on the inside of the barrel. Has a gated structure, the ends of the cylinder being occluded by the N-termini of the alpha-subunits. Is capped at one or both ends by the proteasome regulatory ATPase, PAN.

The protein localises to the cytoplasm. It carries out the reaction Cleavage of peptide bonds with very broad specificity.. The formation of the proteasomal ATPase PAN-20S proteasome complex, via the docking of the C-termini of PAN into the intersubunit pockets in the alpha-rings, triggers opening of the gate for substrate entry. Interconversion between the open-gate and close-gate conformations leads to a dynamic regulation of the 20S proteasome proteolysis activity. Functionally, component of the proteasome core, a large protease complex with broad specificity involved in protein degradation. This is Proteasome subunit beta 2 from Nitrosopumilus maritimus (strain SCM1).